The primary structure comprises 2326 residues: Telomere-associated protein RIF1 (2326 aa).

Disordered stretches follow at residues 381 to 410 (QGTPSRVPSNPNSANPPQKPGPYPFASPAT), 1105 to 1965 (YTQS…CITP), and 1993 to 2050 (VENK…DDSL). The segment covering 382–396 (GTPSRVPSNPNSANP) has biased composition (polar residues). 2 stretches are compositionally biased toward basic and acidic residues: residues 1112–1126 (SLEKSPLENAKEDFK) and 1150–1182 (CKVDNPLEDVKEKSAYHIEKNSNSEEESSRGDR). Over residues 1216-1225 (SAISCSSTSS) the composition is skewed to low complexity. Polar residues-rich tracts occupy residues 1233–1242 (QPASRRQSFI) and 1252–1270 (SRPFSPSALNSVSEVSQSA). Positions 1290–1299 (KSGEESRKSS) are enriched in basic and acidic residues. Polar residues-rich tracts occupy residues 1318–1332 (MEQQGNQQAKLVTNS) and 1341–1353 (SFVSNSVENSPES). Residues 1376–1402 (PDIKKAEAVMAEIEKVRAFEMDSKENT) show a composition bias toward basic and acidic residues. The segment covering 1403–1412 (PPKTAVSSEQ) has biased composition (polar residues). Basic and acidic residues-rich tracts occupy residues 1448-1480 (QDKEDGYQKKDKRKEDEKALQKKVPQTKEDASQ), 1489-1511 (ASEHAIKKESSLPERSAAEDLGS), and 1519-1539 (GADEEANRSAGKPEDTLKSDS). Positions 1564–1573 (SSQGLLSSIE) are enriched in polar residues. Residues 1586-1595 (SLKKKSGKTK) show a composition bias toward basic residues. Residues 1596-1609 (NKSDSLEGKRKDVQ) are compositionally biased toward basic and acidic residues. Composition is skewed to polar residues over residues 1610–1640 (PESQSHGVSSQVDESKNLSGMNESELSSEVS) and 1671–1683 (RTSPSTQNVSVEQ). Over residues 1697-1712 (RVSDEVLKGDENKCIE) the composition is skewed to basic and acidic residues. Positions 1713-1745 (KQSSVEQHSSVQPENVQGANTSGSDLSSLQMQD) are enriched in polar residues. The segment covering 1776 to 1785 (SKSEDPRELI) has biased composition (basic and acidic residues). Positions 1795 to 1813 (AVSTAEVSGSSNLEESLSI) are enriched in polar residues. Basic and acidic residues-rich tracts occupy residues 1869-1884 (VEIKVKEEVDGNDRAE), 1908-1925 (SEEKAAVEKEEESQHGEM), and 1932-1954 (DGSKPETKQMDELEGNRDGKEEA). Polar residues predominate over residues 2009–2036 (SFTSVNGSPSGVQARCTWSPSASPSTSI).

Belongs to the RIF1 family. As to quaternary structure, interacts with TP53BP1 (when phosphorylated by ATM).

It localises to the nucleus. The protein resides in the chromosome. It is found in the telomere. The protein localises to the cytoplasm. Its subcellular location is the cytoskeleton. It localises to the spindle. Its function is as follows. Key regulator of TP53BP1 that plays a key role in the repair of double-strand DNA breaks (DSBs) in response to DNA damage: acts by promoting non-homologous end joining (NHEJ)-mediated repair of DSBs. In response to DNA damage, interacts with ATM-phosphorylated TP53BP1, allowing recruitment to DNA DSBs. Once recruited to DSBs, RIF1 and TP53BP1 act by promoting NHEJ-mediated repair of DSBs. In the same time, RIF1 and TP53BP1 specifically counteract DSBs resection via homologous recombination (HR) during G1 phase. The polypeptide is Telomere-associated protein RIF1 (Gallus gallus (Chicken)).